The chain runs to 121 residues: UPF0102 protein AAur_2443 (121 aa).

The protein belongs to the UPF0102 family.

The chain is UPF0102 protein AAur_2443 from Paenarthrobacter aurescens (strain TC1).